Consider the following 492-residue polypeptide: Protein adenylyltransferase Fic (492 aa).

Positions 1–17 (MCTEAEQPSPPAQQQEQ) are enriched in low complexity. Positions 1 to 25 (MCTEAEQPSPPAQQQEQGNPPLCKA) are disordered. The helical transmembrane segment at 33–55 (LYRLVLLFVAGSLAAWTFHALSS) threads the bilayer. 2 TPR repeats span residues 118–151 (ALGA…APRH) and 152–186 (PEVL…SPSN). Positions 243–248 (SVGIEG) match the Inhibitory (S/T)XXXE(G/N) motif motif. ATP-binding positions include Glu-247 and 328 to 331 (VGGH). A Fido domain is found at 297-432 (ITIKDILELH…IRPFVRFIAD (136 aa)). The active site involves His-375. ATP contacts are provided by residues 379-386 (DGNGRTSR), 411-412 (YY), and Asn-419.

Belongs to the fic family. Homodimer.

It is found in the membrane. It catalyses the reaction L-tyrosyl-[protein] + ATP = O-(5'-adenylyl)-L-tyrosyl-[protein] + diphosphate. The enzyme catalyses L-threonyl-[protein] + ATP = 3-O-(5'-adenylyl)-L-threonyl-[protein] + diphosphate. The catalysed reaction is 3-O-(5'-adenylyl)-L-threonyl-[protein] + H2O = L-threonyl-[protein] + AMP + H(+). With respect to regulation, the side chain of Glu-247 determines which of the two opposing activities (AMPylase or de-AMPylase) will take place. In response to endoplasmic reticulum stress, mediates de-AMPylase activity. Adenylyltransferase activity is inhibited by the inhibitory helix present at the N-terminus: Glu-247 binds ATP and competes with ATP-binding at Arg-386, thereby preventing adenylyltransferase activity. In unstressed cells, disengagement of Glu-247 promotes adenylyltransferase activity. Activation dissociates ATP-binding from Glu-247, allowing ordered binding of the entire ATP moiety with the alpha-phosphate in an orientation that is productive for accepting an incoming target hydroxyl side chain. Its function is as follows. Protein that can both mediate the addition of adenosine 5'-monophosphate (AMP) to specific residues of target proteins (AMPylation), and the removal of the same modification from target proteins (de-AMPylation), depending on the context. The side chain of Glu-247 determines which of the two opposing activities (AMPylase or de-AMPylase) will take place. Acts as a key regulator of the unfolded protein response (UPR) by mediating AMPylation or de-AMPylation of Hsc70-3/BiP. In unstressed cells, acts as an adenylyltransferase by mediating AMPylation of Hsc70-3/BiP at 'Thr-518', thereby inactivating it. In response to endoplasmic reticulum stress, acts as a phosphodiesterase by mediating removal of ATP (de-AMPylation) from Hsc70-3/BiP at 'Thr-518', leading to restore HSPA5/BiP activity. The sequence is that of Protein adenylyltransferase Fic from Drosophila sechellia (Fruit fly).